Consider the following 635-residue polypeptide: DNA-directed RNA polymerase III subunit rpc3 (635 aa).

Disordered regions lie at residues 131–164 (PEQS…SDQQ), 246–295 (VPRG…GYDT), and 386–424 (SGSI…LSSG). A compositionally biased stretch (acidic residues) spans 272–292 (SVDEDDEQDEEENEWSDDEMG). The segment covering 398 to 407 (DNRRGKRPLE) has biased composition (basic and acidic residues). Residues 411 to 424 (NGTNHEGANGLSSG) are compositionally biased toward polar residues. Residues 562–583 (TYKAMSRCFQRLRFERNRLKEF) are leucine-zipper.

It belongs to the RNA polymerase beta chain family. Component of the RNA polymerase III (Pol III) complex consisting of 17 subunits.

It localises to the nucleus. In terms of biological role, DNA-dependent RNA polymerase catalyzes the transcription of DNA into RNA using the four ribonucleoside triphosphates as substrates. Specific core component of RNA polymerase III which synthesizes small RNAs, such as 5S rRNA and tRNAs. This Aspergillus clavatus (strain ATCC 1007 / CBS 513.65 / DSM 816 / NCTC 3887 / NRRL 1 / QM 1276 / 107) protein is DNA-directed RNA polymerase III subunit rpc3 (rpc82).